The sequence spans 100 residues: A-type ATP synthase subunit F (100 aa).

Belongs to the V-ATPase F subunit family. As to quaternary structure, has multiple subunits with at least A(3), B(3), C, D, E, F, H, I and proteolipid K(x).

The protein resides in the cell membrane. In terms of biological role, component of the A-type ATP synthase that produces ATP from ADP in the presence of a proton gradient across the membrane. In Methanocorpusculum labreanum (strain ATCC 43576 / DSM 4855 / Z), this protein is A-type ATP synthase subunit F.